The primary structure comprises 834 residues: Kinesin-like protein KIF18B (834 aa).

The Kinesin motor domain maps to 9–353 (VVRVVVRVRP…LKYADRAKEI (345 aa)). 111-118 (GATGAGKT) contributes to the ATP binding site. Residues 368–404 (ISQYATICQQLQAEVAFLREKLQMYEAGAQALQQQCS) adopt a coiled-coil conformation. Disordered regions lie at residues 400 to 508 (QQQC…ADHS), 602 to 642 (LGAP…NLEM), 655 to 686 (RGSL…RVCP), and 800 to 834 (KKPN…TESY). The segment covering 411-432 (SIPQSLSSSSLQPGPSSQSSTL) has biased composition (low complexity). A Phosphothreonine modification is found at T431. Positions 462–474 (EQEQCPQDKQCPT) are enriched in polar residues. S484 is modified (phosphoserine). The segment covering 611-620 (TSDKTFQKPT) has biased composition (basic and acidic residues). Residues 619-627 (PTKEKKRKL) carry the Nuclear localization signal motif. Phosphoserine is present on residues S634 and S657. Position 669 is a phosphothreonine (T669). The residue at position 814 (S814) is a Phosphoserine.

This sequence belongs to the TRAFAC class myosin-kinesin ATPase superfamily. Kinesin family. As to quaternary structure, interacts with MAPRE1; this interaction is required for efficient accumulation at microtubule plus ends. Interacts with KIF2C at microtubule tips; this interaction increases the affinity of both partners for microtubule plus ends and is required for robust microtubule depolymerization. KIF2C phosphorylation by AURKA or AURKB strongly reduces KIF18B-binding.

It localises to the nucleus. The protein resides in the cytoplasm. Its subcellular location is the cytoskeleton. Its function is as follows. In complex with KIF2C, constitutes the major microtubule plus-end depolymerizing activity in mitotic cells. Its major role may be to transport KIF2C and/or MAPRE1 along microtubules. The sequence is that of Kinesin-like protein KIF18B (Kif18b) from Mus musculus (Mouse).